The chain runs to 5233 residues: E3 ubiquitin-protein ligase highwire (5233 aa).

Residues 197–230 (VVGGPGLPAEKRPRRDSANSDADSDTEEPTEREP) form a disordered region. The segment covering 205 to 214 (AEKRPRRDSA) has biased composition (basic and acidic residues). 2 positions are modified to phosphoserine: S213 and S216. 3 RCC1 repeats span residues 615 to 666 (NGRV…ALLV), 669 to 724 (DGTV…FVTK), and 768 to 818 (KGQL…DKRL). The tract at residues 680-700 (RGEDGDSSKNRRQPKAVKPKK) is disordered. A compositionally biased stretch (basic residues) spans 689 to 700 (NRRQPKAVKPKK). Positions 900-950 (TELKPPPSDVQQRQQRSKTLIMRRKERKGELETGAAGGGAATPTDLDKDPP) are disordered. Positions 908–917 (DVQQRQQRSK) are enriched in polar residues. RCC1 repeat units follow at residues 931 to 983 (ETGA…VLTL), 984 to 1033 (AGEV…LLTS), and 1035 to 1084 (GMVY…TVAP). Disordered regions lie at residues 1051-1109 (LPSD…EMPP) and 1287-1327 (AAAA…PPQL). Residues 1092–1103 (RSQSPANVQPSG) are compositionally biased toward polar residues. Positions 1287–1302 (AAAAAVAAPGTPVSAG) are enriched in low complexity. The segment at 1436 to 1587 (NRFDNFGGGW…GQIPAILYRL (152 aa)) is PHR domain 1. The segment at 1681 to 1718 (SSTSVATGGGSNAAHGSGVVTTAKSVQSKPNKDKNTPR) is disordered. Positions 1699 to 1709 (VVTTAKSVQSK) are enriched in polar residues. A PHR domain 2 region spans residues 2014 to 2169 (ARFARCDVSR…GQLPCILYYS (156 aa)). Disordered stretches follow at residues 2329 to 2353 (SADLRNGQSQSVSQSQSQSQSVPIN) and 2580 to 2604 (NGAGDRRRNTGGGIAGSGAAPNTHQ). The segment covering 2336–2350 (QSQSVSQSQSQSQSV) has biased composition (low complexity). The interval 2885–4082 (AEVSAPGPNL…FVSSLNPTGG (1198 aa)) is required for interaction with Rae1. The Filamin repeat unit spans residues 2906 to 3000 (WGGMAPPPRI…LEEVYRVDVK (95 aa)). 6 disordered regions span residues 3005–3024 (PPPTQRNSAQRRPQAPSKLR), 3117–3210 (KGVG…EPEQ), 3277–3333 (GGQD…ASET), 3348–3378 (TTTGQGEQQSELQLATTSTASSASKRNPMGP), 3551–3587 (PRLLSPGSRDLNGDADTEGKEGKNSDQASAGEKDLGR), and 3901–3936 (ASLAQHNHPPPHHPQQQHHQQQQMNLQLQQHQAPPV). Basic and acidic residues predominate over residues 3176-3191 (KHADLAEREAQVQEER). Residues 3192–3210 (EKEEEQVDDEDADDREPEQ) show a composition bias toward acidic residues. A compositionally biased stretch (polar residues) spans 3282–3292 (PRGNGNRSQQE). Residues 3348 to 3371 (TTTGQGEQQSELQLATTSTASSAS) show a composition bias toward low complexity. Residues 3917-3932 (QHHQQQQMNLQLQQHQ) show a composition bias toward low complexity. The DOC domain occupies 4195–4374 (HNQVHSVATG…KHQPHLRLSH (180 aa)). Disordered regions lie at residues 4633-4655 (ASTGPSGSGGVSGSSSGNGGAVL) and 4680-4702 (LRSRPPTGEPGTTDPFQFDALPP). Residues 4638–4652 (SGSGGVSGSSSGNGG) show a composition bias toward gly residues. Positions 4991, 4994, 5009, 5011, 5014, 5017, 5038, 5041, 5101, and 5104 each coordinate Zn(2+). The segment at 4991–5042 (CMICFVEALSCAPSIHLECGHVFHYHCCKAVLEKRWSGPRITFGFSLCPICK) adopts an RING-type; atypical zinc-finger fold. A tandem cysteine domain region spans residues 5096-5231 (YAYYVCFKCQ…LGCGVCRNAQ (136 aa)). C5115 is an active-site residue. C5130, C5133, C5142, H5145, C5154, C5157, and C5158 together coordinate Zn(2+). C5165 is a catalytic residue. C5172, C5175, C5193, C5207, H5213, C5224, and C5227 together coordinate Zn(2+).

This sequence belongs to the RING-Cys relay (RCR) family. In terms of assembly, component of an E3 ubiquitin ligase complex composed of hiw, Rae1 and Fsn. Interacts with Rae1; the interaction with Rae1 may protect hiw from autophagy-mediated degradation. As to expression, express throughout the nervous system. Stage 13 embryos show expression in the central nervous system (CNS) at the longitudinal axon tracts around which the synaptic neuropil forms. Expression outside the CNS starts at stage 16 in presynaptic terminals at the periactive zone which surround the active zone. Expression at neuromuscular junctions (NMJ) and in the CNS is also seen in third instar larvae (at protein level).

Its subcellular location is the synapse. It is found in the cell projection. The protein localises to the axon. The enzyme catalyses [E2 ubiquitin-conjugating enzyme]-S-ubiquitinyl-L-cysteine + [acceptor protein]-L-threonine = [E2 ubiquitin-conjugating enzyme]-L-cysteine + [acceptor protein]-3-O-ubiquitinyl-L-threonine.. It participates in protein modification; protein ubiquitination. Atypical E3 ubiquitin-protein ligase which specifically mediates ubiquitination of threonine and serine residues on target proteins, instead of ubiquitinating lysine residues. Shows esterification activity towards both threonine and serine, with a preference for threonine, and acts via two essential catalytic cysteine residues that relay ubiquitin to its substrate via thioester intermediates. Required in the presynaptic motoneuron to down-regulate the levels of wnd and restrain synaptic terminal growth at the neuromuscular junction (NMJ) together with Rae1 and Fsn. In Drosophila melanogaster (Fruit fly), this protein is E3 ubiquitin-protein ligase highwire.